The following is a 120-amino-acid chain: Ribosome-binding factor A (120 aa).

Belongs to the RbfA family. Monomer. Binds 30S ribosomal subunits, but not 50S ribosomal subunits or 70S ribosomes.

It is found in the cytoplasm. In terms of biological role, one of several proteins that assist in the late maturation steps of the functional core of the 30S ribosomal subunit. Associates with free 30S ribosomal subunits (but not with 30S subunits that are part of 70S ribosomes or polysomes). Required for efficient processing of 16S rRNA. May interact with the 5'-terminal helix region of 16S rRNA. The polypeptide is Ribosome-binding factor A (Fusobacterium nucleatum subsp. nucleatum (strain ATCC 25586 / DSM 15643 / BCRC 10681 / CIP 101130 / JCM 8532 / KCTC 2640 / LMG 13131 / VPI 4355)).